We begin with the raw amino-acid sequence, 520 residues long: Cytochrome P450 734A1 (520 aa).

Residues valine 13–tryptophan 33 traverse the membrane as a helical segment. Residue cysteine 463 coordinates heme.

Belongs to the cytochrome P450 family. Heme is required as a cofactor.

It is found in the membrane. Cytochrome P450 involved in brassinosteroids (BRs) inactivation and regulation of BRs homeostasis. Inactivates the BRs castasterone (CS) and brassinolide (BL) through carbon 26 hydroxylation. Acts in association with CYP72C1 to inactivate BRs and modulate photomorphogenesis. This chain is Cytochrome P450 734A1 (CYP734A1), found in Arabidopsis thaliana (Mouse-ear cress).